Consider the following 158-residue polypeptide: uncharacterized protein (158 aa).

Disordered stretches follow at residues 1-86 and 138-158; these read MDFR…DHWW and ASQV…LLGF. Residues 7–76 are compositionally biased toward low complexity; sequence SPTTCTTPAS…PTPASSGSAA (70 aa).

This is an uncharacterized protein from Homo sapiens (Human).